We begin with the raw amino-acid sequence, 365 residues long: Phospho-N-acetylmuramoyl-pentapeptide-transferase (365 aa).

The next 10 membrane-spanning stretches (helical) occupy residues 29 to 49 (VGGL…IIVW), 73 to 93 (GTPT…VIIW), 97 to 117 (SNIY…LGLV), 133 to 153 (ILNK…IMFI), 171 to 191 (IVCK…VGTS), 202 to 222 (GLVI…TWVV), 242 to 262 (LVVV…FNSY), 266 to 286 (IFMG…VSIL), 291 to 311 (YLLL…IFQV), and 341 to 361 (IVVR…VIFI).

It belongs to the glycosyltransferase 4 family. MraY subfamily. Mg(2+) serves as cofactor.

The protein resides in the cell inner membrane. The enzyme catalyses UDP-N-acetyl-alpha-D-muramoyl-L-alanyl-gamma-D-glutamyl-meso-2,6-diaminopimeloyl-D-alanyl-D-alanine + di-trans,octa-cis-undecaprenyl phosphate = di-trans,octa-cis-undecaprenyl diphospho-N-acetyl-alpha-D-muramoyl-L-alanyl-D-glutamyl-meso-2,6-diaminopimeloyl-D-alanyl-D-alanine + UMP. Its pathway is cell wall biogenesis; peptidoglycan biosynthesis. Functionally, catalyzes the initial step of the lipid cycle reactions in the biosynthesis of the cell wall peptidoglycan: transfers peptidoglycan precursor phospho-MurNAc-pentapeptide from UDP-MurNAc-pentapeptide onto the lipid carrier undecaprenyl phosphate, yielding undecaprenyl-pyrophosphoryl-MurNAc-pentapeptide, known as lipid I. The protein is Phospho-N-acetylmuramoyl-pentapeptide-transferase of Blochmanniella floridana.